The sequence spans 335 residues: Ferrochelatase (335 aa).

The Fe cation site is built by H207 and E288.

The protein belongs to the ferrochelatase family.

It is found in the cytoplasm. The catalysed reaction is heme b + 2 H(+) = protoporphyrin IX + Fe(2+). It functions in the pathway porphyrin-containing compound metabolism; protoheme biosynthesis; protoheme from protoporphyrin-IX: step 1/1. In terms of biological role, catalyzes the ferrous insertion into protoporphyrin IX. The sequence is that of Ferrochelatase from Helicobacter pylori (strain HPAG1).